Consider the following 909-residue polypeptide: DNA mismatch repair protein MutS (909 aa).

Over residues glutamine 275–glutamine 290 the composition is skewed to basic and acidic residues. The disordered stretch occupies residues glutamine 275–phenylalanine 295. Glycine 661–serine 668 contacts ATP.

The protein belongs to the DNA mismatch repair MutS family.

Functionally, this protein is involved in the repair of mismatches in DNA. It is possible that it carries out the mismatch recognition step. This protein has a weak ATPase activity. The polypeptide is DNA mismatch repair protein MutS (Mesorhizobium japonicum (strain LMG 29417 / CECT 9101 / MAFF 303099) (Mesorhizobium loti (strain MAFF 303099))).